The sequence spans 153 residues: Acetylacetone-cleaving enzyme (153 aa).

Homotetramer. Fe cation serves as cofactor.

The catalysed reaction is acetylacetone + O2 = methylglyoxal + acetate + H(+). It functions in the pathway xenobiotic degradation; acetylacetone degradation. In terms of biological role, cleaves acetylacetone to equimolar amounts of methylglyoxal and acetate, consuming one equivalent of molecular oxygen. This Acinetobacter johnsonii protein is Acetylacetone-cleaving enzyme (dke1).